A 524-amino-acid polypeptide reads, in one-letter code: MSRQLNLYPGGERLAFSGCSAIISSRVSSSTASFRASGIKGTATFGSRSLFNCGGGRRPALSSAAGRGGSALGSCAATGGGRRGGFVGTVFGSAGLGPACPSVCPPGGIPQVTVNKSLLSPLNVELDPEIQKVRAQEREQIKALNNKFASFIDKVRFLEQQNQVLGTKWELLQQLDLNNCKNNLEPILEGYTSNLRKQLEMLSGDRVRLDSELRSMRDVVEEYKKRYEVEINRRTAAENEFVMLKKDVDAAYMNKVELQAKVDSLTDEIKFLKCLYEGEIAQLQSHISDTSVILSMDNNRDLDLDSIIAQVRAQYEEIALKSKAEAEALYQTKIQELQATAGQHGDDLKLTKAEISDLNRMIQRIRSEIGNVKKQCSNLEMAIADAEQRGDCALKDARAKLDELDAALLQAKEELARMMREYQELMSTKLALDMEIATYRKLLEGEECRMSGEYPNSVSISVISNTSTGAGGTGFSMGFGALSSYSYKSSAVDVKTKGSCGGSELKDAPAKTSGSSCATKKASR.

The head stretch occupies residues 1-136; that stretch reads MSRQLNLYPG…DPEIQKVRAQ (136 aa). The tract at residues 137–172 is coil 1A; that stretch reads EREQIKALNNKFASFIDKVRFLEQQNQVLGTKWELL. Positions 137–450 constitute an IF rod domain; that stretch reads EREQIKALNN…KLLEGEECRM (314 aa). Residues 173 to 191 form a linker 1 region; sequence QQLDLNNCKNNLEPILEGY. The coil 1B stretch occupies residues 192–283; the sequence is TSNLRKQLEM…CLYEGEIAQL (92 aa). Residues 284–307 form a linker 12 region; that stretch reads QSHISDTSVILSMDNNRDLDLDSI. Positions 308 to 446 are coil 2; the sequence is IAQVRAQYEE…ATYRKLLEGE (139 aa). The segment at 447–524 is tail; sequence ECRMSGEYPN…SSCATKKASR (78 aa). The disordered stretch occupies residues 495–524; the sequence is KTKGSCGGSELKDAPAKTSGSSCATKKASR.

This sequence belongs to the intermediate filament family. In terms of assembly, heterotetramer of two type I and two type II keratins.

Functionally, has a role in hair formation. Specific component of keratin intermediate filaments in the inner root sheath (IRS) of the hair follicle. This Bos taurus (Bovine) protein is Keratin, type II cytoskeletal 72 (KRT72).